A 113-amino-acid polypeptide reads, in one-letter code: Flagellar hook-basal body complex protein FliE (113 aa).

This sequence belongs to the FliE family.

Its subcellular location is the bacterial flagellum basal body. The polypeptide is Flagellar hook-basal body complex protein FliE (Rhizobium etli (strain ATCC 51251 / DSM 11541 / JCM 21823 / NBRC 15573 / CFN 42)).